Reading from the N-terminus, the 286-residue chain is ATP phosphoribosyltransferase (286 aa).

The protein belongs to the ATP phosphoribosyltransferase family. Long subfamily. Requires Mg(2+) as cofactor.

The protein resides in the cytoplasm. It carries out the reaction 1-(5-phospho-beta-D-ribosyl)-ATP + diphosphate = 5-phospho-alpha-D-ribose 1-diphosphate + ATP. Its pathway is amino-acid biosynthesis; L-histidine biosynthesis; L-histidine from 5-phospho-alpha-D-ribose 1-diphosphate: step 1/9. With respect to regulation, feedback inhibited by histidine. In terms of biological role, catalyzes the condensation of ATP and 5-phosphoribose 1-diphosphate to form N'-(5'-phosphoribosyl)-ATP (PR-ATP). Has a crucial role in the pathway because the rate of histidine biosynthesis seems to be controlled primarily by regulation of HisG enzymatic activity. In Cytophaga hutchinsonii (strain ATCC 33406 / DSM 1761 / CIP 103989 / NBRC 15051 / NCIMB 9469 / D465), this protein is ATP phosphoribosyltransferase.